A 208-amino-acid chain; its full sequence is High frequency lysogenization protein HflD homolog (208 aa).

It belongs to the HflD family.

The protein resides in the cytoplasm. The protein localises to the cell inner membrane. The protein is High frequency lysogenization protein HflD homolog of Yersinia pestis bv. Antiqua (strain Nepal516).